Consider the following 705-residue polypeptide: MQETVFLFTEENLNKEQSLGVKYKQSSRRVVPMTSCEVSDTAAEIRIVEKVLKNGDLYNGGLSAGVPHGTGKYLWSDGCMYEGEWTRGKASGKGRFSWPSGATYEGQFKDGRMDGEGTFIGIDGDTYRGHWLWGRKHGYGEKRYANGDGYQGNWKANLQDGNGRYVWSDGNEYVGEWKNGVISGKGKMTWANGNRYDGLWENGAPVGKGVLSWGEEKTSYNGWGRKSKKKDEEIVQNHKLSSVETLSANTNFPRICISELEDTGVCDHVEASPYTSESDTSGCGEQEWARSPLLLESGGAMSVQQSPRWLDEGDVKKPGHTVTAGHKNYDLMLNLQLGIRYSVGKHASLLRELRHSDFDPKDKQWTRFPPEGSKSTPPHLSAEFKWKDYCPIVFRHLRDLFAIDQADYMLAICGNESLREFASPGKSGSAFYLTQDERYMIKTMKKSEIKVLLKMLPNYYEHVSKYKNSLVTKFFGVHCVKPVGGQKTRFIVMGNLFCSEYRIHKRFDLKGSSHGRTIDKDEGEIDETTTLKDLDLKYVFRLETSWFQAFINQIDLDCEFLEAERIMDYSLLIGLHFRESGMRDDISLGIGRRDQEDKLMRGNGPLMRLGESTPAKAEQVSRFEEETWEEDAIDNSNPKGTRKEAVEVILYFGVIDILQDYDITKKLEHAYKSLHADPASISAVDPKLYSRRFRDFINKIFIEDK.

7 MORN repeats span residues 58 to 80 (YNGGLSAGVPHGTGKYLWSDGCM), 81 to 103 (YEGEWTRGKASGKGRFSWPSGAT), 104 to 126 (YEGQFKDGRMDGEGTFIGIDGDT), 127 to 149 (YRGHWLWGRKHGYGEKRYANGDG), 150 to 172 (YQGNWKANLQDGNGRYVWSDGNE), 173 to 195 (YVGEWKNGVISGKGKMTWANGNR), and 196 to 218 (YDGLWENGAPVGKGVLSWGEEKT). Positions 321-701 (TVTAGHKNYD…RFRDFINKIF (381 aa)) constitute a PIPK domain. The tract at residues 661-682 (YDITKKLEHAYKSLHADPASIS) is activation loop.

It is found in the cell membrane. It carries out the reaction a 1,2-diacyl-sn-glycero-3-phospho-(1D-myo-inositol 4-phosphate) + ATP = a 1,2-diacyl-sn-glycero-3-phospho-(1D-myo-inositol-4,5-bisphosphate) + ADP + H(+). Functionally, with DRP1A and DRP2B, required for the precise coordination of polar ARAC3/ROP6 and ARAC4/ROP2 placement and subsequent root hair positioning during planar polarity formation in root hair-forming cells, probably by mediating the correct basal-to-planar polarity switching of D6PK into the polar, lipid-enriched domain. This chain is Phosphatidylinositol 4-phosphate 5-kinase 3, found in Arabidopsis thaliana (Mouse-ear cress).